Consider the following 474-residue polypeptide: Cysteine--tRNA ligase (474 aa).

Residue C27 coordinates Zn(2+). Residues 29-39 (ITPYDHMHVGH) carry the 'HIGH' region motif. The Zn(2+) site is built by C213, H238, and E242. A 'KMSKS' region motif is present at residues 271–275 (KMSKS). K274 contributes to the ATP binding site.

This sequence belongs to the class-I aminoacyl-tRNA synthetase family. Requires Zn(2+) as cofactor.

Its subcellular location is the cytoplasm. It catalyses the reaction tRNA(Cys) + L-cysteine + ATP = L-cysteinyl-tRNA(Cys) + AMP + diphosphate. The chain is Cysteine--tRNA ligase from Pyrobaculum neutrophilum (strain DSM 2338 / JCM 9278 / NBRC 100436 / V24Sta) (Thermoproteus neutrophilus).